Here is a 419-residue protein sequence, read N- to C-terminus: Fumarylacetoacetase (419 aa).

Ser2 bears the N-acetylserine mark. Ser84 and Ser92 each carry phosphoserine. Residue Asp126 participates in Ca(2+) binding. Residue Tyr128 coordinates substrate. The Proton acceptor role is filled by His133. Arg142 provides a ligand contact to substrate. Ca(2+)-binding residues include Glu199, Glu201, and Asp233. Position 233 (Asp233) interacts with Mg(2+). Positions 240 and 244 each coordinate substrate. Positions 253 and 257 each coordinate Mg(2+). Position 309 is a phosphoserine (Ser309). Thr350 is a substrate binding site. Ser417 carries the phosphoserine modification.

It belongs to the FAH family. In terms of assembly, homodimer. Ca(2+) is required as a cofactor. Mg(2+) serves as cofactor. In terms of tissue distribution, mainly in liver and kidney.

It catalyses the reaction 4-fumarylacetoacetate + H2O = acetoacetate + fumarate + H(+). Its pathway is amino-acid degradation; L-phenylalanine degradation; acetoacetate and fumarate from L-phenylalanine: step 6/6. In Rattus norvegicus (Rat), this protein is Fumarylacetoacetase (Fah).